A 185-amino-acid chain; its full sequence is Peptidyl-tRNA hydrolase (185 aa).

TRNA is bound at residue Tyr14. His19 acts as the Proton acceptor in catalysis. TRNA contacts are provided by Tyr65, Asn67, and Asn113.

Belongs to the PTH family. Monomer.

It localises to the cytoplasm. It carries out the reaction an N-acyl-L-alpha-aminoacyl-tRNA + H2O = an N-acyl-L-amino acid + a tRNA + H(+). Hydrolyzes ribosome-free peptidyl-tRNAs (with 1 or more amino acids incorporated), which drop off the ribosome during protein synthesis, or as a result of ribosome stalling. Functionally, catalyzes the release of premature peptidyl moieties from peptidyl-tRNA molecules trapped in stalled 50S ribosomal subunits, and thus maintains levels of free tRNAs and 50S ribosomes. In Rickettsia typhi (strain ATCC VR-144 / Wilmington), this protein is Peptidyl-tRNA hydrolase.